We begin with the raw amino-acid sequence, 233 residues long: Sugar fermentation stimulation protein homolog (233 aa).

It belongs to the SfsA family.

The sequence is that of Sugar fermentation stimulation protein homolog from Saccharophagus degradans (strain 2-40 / ATCC 43961 / DSM 17024).